The sequence spans 370 residues: Cytochrome b (370 aa).

4 consecutive transmembrane segments (helical) span residues 25–45 (FGSM…FLAV), 69–90 (WMMQ…YIHI), 105–125 (WLSG…GYVL), and 170–190 (FFAL…LHIL). His-75 and His-89 together coordinate heme b. Heme b-binding residues include His-174 and His-188. His-193 serves as a coordination point for a ubiquinone. The next 4 membrane-spanning stretches (helical) occupy residues 218 to 238 (YKDM…VSFF), 280 to 300 (LGGA…PFTH), 312 to 332 (FMQL…WTAT), and 339 to 358 (FTTI…ISNP).

This sequence belongs to the cytochrome b family. As to quaternary structure, the cytochrome bc1 complex contains 3 respiratory subunits (MT-CYB, CYC1 and UQCRFS1), 2 core proteins (UQCRC1 and UQCRC2) and probably 6 low-molecular weight proteins. Heme b serves as cofactor.

It is found in the mitochondrion inner membrane. Functionally, component of the ubiquinol-cytochrome c reductase complex (complex III or cytochrome b-c1 complex) that is part of the mitochondrial respiratory chain. The b-c1 complex mediates electron transfer from ubiquinol to cytochrome c. Contributes to the generation of a proton gradient across the mitochondrial membrane that is then used for ATP synthesis. This Chilabothrus exsul (Abaco Island boa) protein is Cytochrome b (MT-CYB).